We begin with the raw amino-acid sequence, 212 residues long: Peptide methionine sulfoxide reductase MsrA (212 aa).

Residue Cys52 is part of the active site.

The protein belongs to the MsrA Met sulfoxide reductase family.

It carries out the reaction L-methionyl-[protein] + [thioredoxin]-disulfide + H2O = L-methionyl-(S)-S-oxide-[protein] + [thioredoxin]-dithiol. The enzyme catalyses [thioredoxin]-disulfide + L-methionine + H2O = L-methionine (S)-S-oxide + [thioredoxin]-dithiol. In terms of biological role, has an important function as a repair enzyme for proteins that have been inactivated by oxidation. Catalyzes the reversible oxidation-reduction of methionine sulfoxide in proteins to methionine. The protein is Peptide methionine sulfoxide reductase MsrA of Escherichia coli (strain ATCC 8739 / DSM 1576 / NBRC 3972 / NCIMB 8545 / WDCM 00012 / Crooks).